A 136-amino-acid polypeptide reads, in one-letter code: Protein PsiE homolog (136 aa).

Transmembrane regions (helical) follow at residues 15–35 (AMQAVLNLALLCLGIILVVFL), 58–78 (VEGLVVYFLYFEFIALIVKYF), 82–102 (FHFPLRYFVYIGITAIVRLII), and 108–128 (PLAVLIYSAAILILVITLWLC).

This sequence belongs to the PsiE family.

It is found in the cell inner membrane. The sequence is that of Protein PsiE homolog from Klebsiella pneumoniae subsp. pneumoniae (strain ATCC 700721 / MGH 78578).